The chain runs to 194 residues: Small ribosomal subunit protein uS7 (194 aa).

This sequence belongs to the universal ribosomal protein uS7 family. Part of the 30S ribosomal subunit.

In terms of biological role, one of the primary rRNA binding proteins, it binds directly to 16S rRNA where it nucleates assembly of the head domain of the 30S subunit. Is located at the subunit interface close to the decoding center. The sequence is that of Small ribosomal subunit protein uS7 from Methanospirillum hungatei JF-1 (strain ATCC 27890 / DSM 864 / NBRC 100397 / JF-1).